The chain runs to 195 residues: Imidazoleglycerol-phosphate dehydratase (195 aa).

The protein belongs to the imidazoleglycerol-phosphate dehydratase family.

It is found in the cytoplasm. The catalysed reaction is D-erythro-1-(imidazol-4-yl)glycerol 3-phosphate = 3-(imidazol-4-yl)-2-oxopropyl phosphate + H2O. It participates in amino-acid biosynthesis; L-histidine biosynthesis; L-histidine from 5-phospho-alpha-D-ribose 1-diphosphate: step 6/9. This Geobacillus sp. (strain WCH70) protein is Imidazoleglycerol-phosphate dehydratase.